We begin with the raw amino-acid sequence, 39 residues long: uncharacterized protein (39 aa).

This is an uncharacterized protein from Haemophilus influenzae (strain ATCC 51907 / DSM 11121 / KW20 / Rd).